We begin with the raw amino-acid sequence, 749 residues long: Cytosolic phospholipase A2 (749 aa).

The segment at Met-1–Ser-178 is phospholipid binding. Phosphoserine is present on Ser-2. A C2 domain is found at Pro-6–Phe-122. 7 residues coordinate Ca(2+): Asp-40, Thr-41, Asp-43, Asn-65, Asp-93, Ala-94, and Asn-95. One can recognise a PLA2c domain in the interval Ser-140–Asn-740. Ser-228 serves as the catalytic Nucleophile. Thr-268 bears the Phosphothreonine mark. The tract at residues Ala-426 to Asn-458 is disordered. 3 positions are modified to phosphoserine: Ser-434, Ser-435, and Ser-437. Basic and acidic residues predominate over residues Gly-446–Gln-457. Ser-505 is modified (phosphoserine; by MAPK). Ser-515 bears the Phosphoserine mark. Lys-541 participates in a covalent cross-link: Glycyl lysine isopeptide (Lys-Gly) (interchain with G-Cter in SUMO2). The active-site Proton acceptor is the Asp-549. Lys-606 participates in a covalent cross-link: Glycyl lysine isopeptide (Lys-Gly) (interchain with G-Cter in SUMO2). Ser-727 and Ser-729 each carry phosphoserine.

Interacts with KAT5. Phosphorylated at both Ser-505 and Ser-727 in response to mitogenic stimuli. In terms of tissue distribution, detected in granulosa cells after stimulation with chorionic gonadotropin (at protein level).

It localises to the cytoplasm. The protein localises to the golgi apparatus membrane. Its subcellular location is the nucleus envelope. It carries out the reaction a 1,2-diacyl-sn-glycero-3-phosphocholine + H2O = a 1-acyl-sn-glycero-3-phosphocholine + a fatty acid + H(+). The catalysed reaction is a 1-O-alkyl-2-acyl-sn-glycero-3-phosphocholine + H2O = a 1-O-alkyl-sn-glycero-3-phosphocholine + a fatty acid + H(+). It catalyses the reaction a 1-acyl-sn-glycero-3-phosphocholine + H2O = sn-glycerol 3-phosphocholine + a fatty acid + H(+). The enzyme catalyses 1-hexadecanoyl-2-(5Z,8Z,11Z,14Z-eicosatetraenoyl)-sn-glycero-3-phosphocholine + H2O = 1-hexadecanoyl-sn-glycero-3-phosphocholine + (5Z,8Z,11Z,14Z)-eicosatetraenoate + H(+). It carries out the reaction 1,2-di-(5Z,8Z,11Z,14Z-eicosatetraenoyl)-sn-glycero-3-phosphocholine + H2O = 1-(5Z,8Z,11Z,14Z-eicosatetraenoyl)-sn-glycero-3-phosphocholine + (5Z,8Z,11Z,14Z)-eicosatetraenoate + H(+). The catalysed reaction is 1-octadecanoyl-2-(5Z,8Z,11Z,14Z-eicosatetraenoyl)-sn-glycero-3-phosphocholine + H2O = 1-octadecanoyl-sn-glycero-3-phosphocholine + (5Z,8Z,11Z,14Z)-eicosatetraenoate + H(+). It catalyses the reaction 1-hexadecanoyl-2-(9Z,12Z-octadecadienoyl)-sn-glycero-3-phosphocholine + H2O = (9Z,12Z)-octadecadienoate + 1-hexadecanoyl-sn-glycero-3-phosphocholine + H(+). The enzyme catalyses 1-octadecanoyl-2-(9Z,12Z,15Z-octadecatrienoyl)-sn-glycero-3-phosphocholine + H2O = (9Z,12Z,15Z)-octadecatrienoate + 1-octadecanoyl-sn-glycero-3-phosphocholine + H(+). It carries out the reaction 1-(5Z,8Z,11Z,14Z-eicosatetraenoyl)-2-hexadecanoyl-sn-glycero-3-phosphocholine + H2O = 1-(5Z,8Z,11Z,14Z-eicosatetraenoyl)-sn-glycero-3-phosphocholine + hexadecanoate + H(+). The catalysed reaction is 1-O-hexadecyl-2-(5Z,8Z,11Z,14Z)-eicosatetraenoyl-sn-glycero-3-phosphocholine + H2O = 1-O-hexadecyl-sn-glycero-3-phosphocholine + (5Z,8Z,11Z,14Z)-eicosatetraenoate + H(+). It catalyses the reaction 1,2-di-(9Z-octadecenoyl)-sn-glycero-3-phospho-(1'-sn-glycerol) + H2O = 1-(9Z-octadecenoyl)-sn-glycero-3-phospho-(1'-sn-glycerol) + (9Z)-octadecenoate + H(+). The enzyme catalyses 1-octadecanoyl-2-(5Z,8Z,11Z,14Z-eicosatetraenoyl)-sn-glycero-3-phosphate + H2O = 1-octadecanoyl-sn-glycero-3-phosphate + (5Z,8Z,11Z,14Z)-eicosatetraenoate + H(+). It carries out the reaction 1-hexadecanoyl-sn-glycero-3-phosphocholine + H2O = sn-glycerol 3-phosphocholine + hexadecanoate + H(+). The catalysed reaction is 2-(prostaglandin E2)-sn-glycero-3-phosphoethanolamine + H2O = sn-glycero-3-phosphoethanolamine + prostaglandin E2 + H(+). It catalyses the reaction 2-[(15S)-hydroxy-(5Z,8Z,11Z,13E)-eicosatetraenoyl]-sn-glycero-3-phosphocholine + H2O = (15S)-hydroxy-(5Z,8Z,11Z,13E)-eicosatetraenoate + sn-glycerol 3-phosphocholine + H(+). The enzyme catalyses 2-[(15R)-hydroxy-(5Z,8Z,11Z,13E)-eicosatetraenoyl]-sn-glycero-3-phosphocholine + H2O = (15R)-hydroxy-(5Z,8Z,11Z,13E)-eicosatetraenoate + sn-glycerol 3-phosphocholine + H(+). It carries out the reaction 2-(prostaglandin E2)-sn-glycero-3-phosphocholine + H2O = prostaglandin E2 + sn-glycerol 3-phosphocholine + H(+). The catalysed reaction is 2-[(11R)-hydroxy-(5Z,8Z,12E,14Z)-eicosatetraenoyl]-sn-glycero-3-phosphocholine + H2O = (11R)-hydroxy-(5Z,8Z,12E,14Z)-eicosatetraenoate + sn-glycerol 3-phosphocholine + H(+). It catalyses the reaction 1-(5Z,8Z,11Z,14Z-eicosatetraenoyl)-2-O-hexadecyl-sn-glycero-3-phosphocholine + H2O = 2-O-hexadecyl-sn-glycero-3-phosphocholine + (5Z,8Z,11Z,14Z)-eicosatetraenoate + H(+). The enzyme catalyses 1-octadecanoyl-2-(5Z,8Z,11Z,14Z-eicosatetraenoyl)-sn-glycero-3-phosphocholine + glycerol = 1-(5Z,8Z,11Z,14Z-eicosatetraenoyl)-glycerol + 1-octadecanoyl-sn-glycero-3-phosphocholine. It carries out the reaction 1-octadecanoyl-2-(9Z,12Z,15Z-octadecatrienoyl)-sn-glycero-3-phosphocholine + glycerol = 1-(9Z,12Z,15Z-octadecatrienoyl)-glycerol + 1-octadecanoyl-sn-glycero-3-phosphocholine. It participates in membrane lipid metabolism; glycerophospholipid metabolism. Its pathway is lipid metabolism; arachidonate metabolism. The protein operates within lipid metabolism; prostaglandin biosynthesis. It functions in the pathway lipid metabolism; leukotriene B4 biosynthesis. Its activity is regulated as follows. Activated by cytosolic calcium, which is necessary for binding to membrane lipids. Activated by phosphorylation in response to mitogenic stimuli. Has primarily calcium-dependent phospholipase and lysophospholipase activities, with a major role in membrane lipid remodeling and biosynthesis of lipid mediators of the inflammatory response. Plays an important role in embryo implantation and parturition through its ability to trigger prostanoid production. Preferentially hydrolyzes the ester bond of the fatty acyl group attached at sn-2 position of phospholipids (phospholipase A2 activity). Selectively hydrolyzes sn-2 arachidonoyl group from membrane phospholipids, providing the precursor for eicosanoid biosynthesis via the cyclooxygenase pathway. In an alternative pathway of eicosanoid biosynthesis, hydrolyzes sn-2 fatty acyl chain of eicosanoid lysophopholipids to release free bioactive eicosanoids. Hydrolyzes the ester bond of the fatty acyl group attached at sn-1 position of phospholipids (phospholipase A1 activity) only if an ether linkage rather than an ester linkage is present at the sn-2 position. This hydrolysis is not stereospecific. Has calcium-independent phospholipase A2 and lysophospholipase activities in the presence of phosphoinositides. Has O-acyltransferase activity. Catalyzes the transfer of fatty acyl chains from phospholipids to a primary hydroxyl group of glycerol (sn-1 or sn-3), potentially contributing to monoacylglycerol synthesis. The chain is Cytosolic phospholipase A2 (PLA2G4A) from Bos taurus (Bovine).